A 428-amino-acid chain; its full sequence is Dihydroorotase (428 aa).

Zn(2+) is bound by residues His59 and His61. Substrate contacts are provided by residues 61-63 (HFR) and Asn93. The Zn(2+) site is built by Asp151, His178, and His231. Asn277 provides a ligand contact to substrate. Asp304 provides a ligand contact to Zn(2+). The active site involves Asp304. Residues His308 and 322-323 (FG) each bind substrate.

Belongs to the metallo-dependent hydrolases superfamily. DHOase family. Class I DHOase subfamily. Zn(2+) is required as a cofactor.

The enzyme catalyses (S)-dihydroorotate + H2O = N-carbamoyl-L-aspartate + H(+). The protein operates within pyrimidine metabolism; UMP biosynthesis via de novo pathway; (S)-dihydroorotate from bicarbonate: step 3/3. In terms of biological role, catalyzes the reversible cyclization of carbamoyl aspartate to dihydroorotate. The protein is Dihydroorotase of Bacillus licheniformis (strain ATCC 14580 / DSM 13 / JCM 2505 / CCUG 7422 / NBRC 12200 / NCIMB 9375 / NCTC 10341 / NRRL NRS-1264 / Gibson 46).